Reading from the N-terminus, the 241-residue chain is Uridylate kinase (241 aa).

Position 12–15 (12–15) interacts with ATP; that stretch reads KLSG. An involved in allosteric activation by GTP region spans residues 20–25; it reads GDKGTG. Gly54 contacts UMP. 2 residues coordinate ATP: Gly55 and Arg59. Residues Asp74 and 135-142 contribute to the UMP site; that span reads TGSPYFST. 3 residues coordinate ATP: Asn163, Tyr169, and Asp172.

Belongs to the UMP kinase family. In terms of assembly, homohexamer.

It is found in the cytoplasm. The enzyme catalyses UMP + ATP = UDP + ADP. The protein operates within pyrimidine metabolism; CTP biosynthesis via de novo pathway; UDP from UMP (UMPK route): step 1/1. Its activity is regulated as follows. Allosterically activated by GTP. Inhibited by UTP. Functionally, catalyzes the reversible phosphorylation of UMP to UDP. This is Uridylate kinase from Pediococcus pentosaceus (strain ATCC 25745 / CCUG 21536 / LMG 10740 / 183-1w).